Reading from the N-terminus, the 962-residue chain is MEDCNVHSAASILASVKEQEARFERLTRALEQERRHVALQLERAQQPGMSSGGMVGSGQPLPMAWQQLVLQEQSPGSQASLATMPEAPEVLEETVTVEEDPGTPTSHVSIVTSEDGTTRRTETKVTKTVKTVTTRTVRQVPLGPDGLPLLDGGPPLGSFADGPLDRHYLLRGGGGPAATLSRTYHSSGGGFPDGPESRDIPSYGSLSRGLGVRPPRTGLLGPGPGDGCFTLPGRREAFPMGSESGPPSGRSLPEHFQAEPYGLEDDTRSLAADDEGGPDLEPDYSTATRRRPEYGRGLRARAFEDTADDAGELIEERPPFPAATAPLAQPERGSLGSLDRVVRRSPSVDSTRKEPRWRDPELPEVLAMLRHPVDPVKANAAAYLQHLCFENEGIKRRVRQLRGLPLLVALLDHPRAEVRRRACGALRNLSYGRDTDNKAAIRDCGGVPALVRLLRAARDNEVRELVTGTLWNLSSYEPLKMVIIDHGLQTLTHEVIVPHSGWEREPNEDSKPRDAEWTTVFKNTSGCLRNVSSDGAEARRRLRECEGLVDALLHALQSAVGRKDTDNKSVENCVCIMRNLSYHVHKEVPGADRYQEAEPGIPGSTTSQRRRKDDASCFGGKKAKEEWFHQGKKDAEMDRNFDTLDLPKRTEAAKGFELLYQPEVVRLYLSLLTESRNFNTLEAAAGALQNLSAGNWTWATYIRATVRKERGLPVLVELLQSETDKVVRAVAIALRNLSLDQRNKDLIGSYAMTELVRNVRNAQAPAHPSAHLEEDTVVAVLNTIHEIVSDSLDNARSLLQARGVPALVALVASSQSVREAKAASHVLQTVWSYKELRGALQRDGWTKSRFQSASTAKGPKGTPSSGGFDDSTLPLVDKSLDGEKSNTRDVIPMDTLGPDGYATVDRRERRTLGSDSTGDTSEKELLRPDPGRKAPPPGPSRPSVRLVDAVGDTKPQPVDSWV.

The stretch at 11–46 forms a coiled coil; sequence SILASVKEQEARFERLTRALEQERRHVALQLERAQQ. The disordered stretch occupies residues 95-123; that stretch reads VTVEEDPGTPTSHVSIVTSEDGTTRRTET. 2 positions are modified to phosphothreonine: Thr103 and Thr105. A compositionally biased stretch (polar residues) spans 103–115; it reads TPTSHVSIVTSED. Arg171 bears the Omega-N-methylarginine mark. 3 disordered regions span residues 233 to 255, 268 to 291, and 322 to 357; these read GRRE…LPEH, RSLA…TRRR, and AATA…EPRW. Ser269 carries the post-translational modification Phosphoserine. Over residues 272 to 282 the composition is skewed to acidic residues; sequence ADDEGGPDLEP. Phosphoserine is present on residues Ser334, Ser337, Ser345, and Ser347. 6 ARM repeats span residues 350-389, 392-431, 435-469, 470-510, 528-567, and 577-623; these read STRK…HLCF, EGIK…NLSY, TDNK…VTGT, LWNL…NEDS, LRNV…DTDN, and MRNL…GKKA. Residues 593–618 form a disordered region; that stretch reads RYQEAEPGIPGSTTSQRRRKDDASCF. Ser607 carries the post-translational modification Phosphoserine. Residues 608-624 carry the Nuclear localization signal motif; the sequence is QRRRKDDASCFGGKKAK. Thr643 is subject to Phosphothreonine. ARM repeat units follow at residues 647-687, 700-739, 740-782, and 783-827; these read PKRT…AAGA, TYIR…NLSL, DQRN…AVLN, and TIHE…SHVL. Residues 777–962 are required for interaction with RNA-binding proteins DDX5, HNRNPH2 and SRSF1 and with mRNAs; that stretch reads VVAVLNTIHE…TKPQPVDSWV (186 aa). Residues 844–962 form a disordered region; it reads GWTKSRFQSA…TKPQPVDSWV (119 aa). Ser864 and Ser871 each carry phosphoserine. Phosphothreonine is present on Thr872. Composition is skewed to basic and acidic residues over residues 878-887 and 920-932; these read KSLDGEKSNT and TSEK…DPGR.

Belongs to the beta-catenin family. As to quaternary structure, component of a ribonucleoprotein complex containing mRNAs and RNA-binding proteins including DDX5, HNRNPH2 and SRSF1 as well as ARVCF. Interacts (via the extreme C-terminus) with FRMPD2 (via the PDZ 2 domain). Interacts with CCDC85B.

Its subcellular location is the cell junction. It is found in the adherens junction. The protein localises to the nucleus. The protein resides in the cytoplasm. Contributes to the regulation of alternative splicing of pre-mRNAs. This Mus musculus (Mouse) protein is Splicing regulator ARVCF (Arvcf).